The primary structure comprises 93 residues: HssA/B-like protein 26 (93 aa).

Belongs to the hssA/B family.

This is HssA/B-like protein 26 (hssl26) from Dictyostelium discoideum (Social amoeba).